The chain runs to 214 residues: Ribonuclease HII (214 aa).

Positions 26–214 constitute an RNase H type-2 domain; that stretch reads EIVCGVDEAG…PVREAFDLIR (189 aa). A divalent metal cation-binding residues include aspartate 32, glutamate 33, and aspartate 124.

The protein belongs to the RNase HII family. Mn(2+) serves as cofactor. Mg(2+) is required as a cofactor.

It is found in the cytoplasm. The catalysed reaction is Endonucleolytic cleavage to 5'-phosphomonoester.. In terms of biological role, endonuclease that specifically degrades the RNA of RNA-DNA hybrids. The sequence is that of Ribonuclease HII from Burkholderia thailandensis (strain ATCC 700388 / DSM 13276 / CCUG 48851 / CIP 106301 / E264).